The following is a 247-amino-acid chain: 2,3-bisphosphoglycerate-dependent phosphoglycerate mutase (247 aa).

Residues 13 to 20 (RHGESDWN), 26 to 27 (TG), arginine 65, 92 to 95 (ERHY), lysine 103, 119 to 120 (RR), and 186 to 187 (GN) contribute to the substrate site. The active-site Tele-phosphohistidine intermediate is histidine 14. The active-site Proton donor/acceptor is the glutamate 92.

The protein belongs to the phosphoglycerate mutase family. BPG-dependent PGAM subfamily. As to quaternary structure, homotetramer, dimer of dimers.

The enzyme catalyses (2R)-2-phosphoglycerate = (2R)-3-phosphoglycerate. Its pathway is carbohydrate degradation; glycolysis; pyruvate from D-glyceraldehyde 3-phosphate: step 3/5. In terms of biological role, catalyzes the interconversion of 2-phosphoglycerate and 3-phosphoglycerate. This chain is 2,3-bisphosphoglycerate-dependent phosphoglycerate mutase, found in Mycobacterium leprae (strain Br4923).